Reading from the N-terminus, the 96-residue chain is Alpha-elapitoxin-Al2b (96 aa).

The first 21 residues, 1 to 21 (MKTLLLTLVVVTIVCLDFGGG), serve as a signal peptide directing secretion. Intrachain disulfides connect cysteine 24–cysteine 41, cysteine 34–cysteine 62, cysteine 47–cysteine 51, cysteine 66–cysteine 77, and cysteine 78–cysteine 83.

This sequence belongs to the three-finger toxin family. Long-chain subfamily. Type II alpha-neurotoxin sub-subfamily. As to expression, expressed by the venom gland.

The protein localises to the secreted. In terms of biological role, potent long-chain postsynaptic neurotoxin. Pseudo-irreversibly inhibits the nicotinic acetylcholine receptor through competitive antagonism. The sequence is that of Alpha-elapitoxin-Al2b from Austrelaps labialis (Pygmy copperhead).